The sequence spans 292 residues: MEIMMGQGRLAIEKIVDPESFKENTIGESSFEDNEVGPGAVVGTAQIGDQDCTIIASDAMAMNERFPVVYAGIIGLEEGYKMAMAVYKTIEADKEKKGTEKRPILLIVDTPGNGPGKQEEIFGMNKSTGAYQLALAEARKAGHPIVAMVIGRAISGAFLCHGLQADRILSLSSKFETMIHVMPLTSVSVITKLDIERLEELSKTNPVFAAGPDFFYQLGGVEELVEEVDGMRSCILKHIAEIREMKAAGEEARLGPWGRGALGEQRGGRMIRGKVMAMMDKQFFAFAEQNLY.

A CoA carboxyltransferase C-terminal domain is found at methionine 1 to lysine 281.

It localises to the cytoplasm. It catalyses the reaction N(6)-biotinyl-L-lysyl-[protein] + malonyl-[ACP] = N(6)-carboxybiotinyl-L-lysyl-[protein] + acetyl-[ACP]. Gamma subunit of the biotin-dependent malonate decarboxylase multienzyme complex (EC 7.2.4.4). The two subunits MADC and MADD are required for the transfer of the malonate carboxy group from the acyl-carrier protein (ACP) to the prosthetic group of the biotin carrier MADF. Required for the regeneration of ACP. The polypeptide is Malonyl-S-ACP:biotin-protein carboxyltransferase MADD (madD) (Malonomonas rubra).